An 89-amino-acid chain; its full sequence is Small ribosomal subunit protein uS14A (89 aa).

The protein belongs to the universal ribosomal protein uS14 family. Part of the 30S ribosomal subunit. Contacts proteins S3 and S10.

In terms of biological role, binds 16S rRNA, required for the assembly of 30S particles and may also be responsible for determining the conformation of the 16S rRNA at the A site. This Pediococcus pentosaceus (strain ATCC 25745 / CCUG 21536 / LMG 10740 / 183-1w) protein is Small ribosomal subunit protein uS14A.